The sequence spans 871 residues: Protein argonaute-2 (871 aa).

In terms of domain architecture, PAZ spans 232–351 (PVIEFMCEVL…LPLEVCNIVA (120 aa)). Interaction with guide RNA stretches follow at residues 314–319 (YFKDRH) and 536–578 (GKTP…LCLK). Residues 529–830 (LVVVILPGKT…VAFRARYHLV (302 aa)) form the Piwi domain. Residues 599–602 (FQQP) are interaction with GW182 family members. A divalent metal cation is bound at residue D609. The interaction with GW182 family members stretch occupies residues 662–672 (LIQFYKSTRFK). D681 is a binding site for a divalent metal cation. Interaction with guide RNA regions lie at residues 721 to 722 (KR), 765 to 773 (HAGIQGTSR), and 802 to 824 (YVRC…VAFR). H819 is a binding site for a divalent metal cation. A disordered region spans residues 834 to 856 (HDSAEGSHTSGQSNGRDQQALAK). A compositionally biased stretch (polar residues) spans 839-850 (GSHTSGQSNGRD).

Belongs to the argonaute family. Ago subfamily. Component of the RISC loading complex (RLC), or micro-RNA (miRNA) loading complex (miRLC), which is composed of dicer1, ago2 and tarbp2. Note that the trimeric RLC/miRLC is also referred to as RISC. Requires Mg(2+) as cofactor. Mn(2+) is required as a cofactor.

Its subcellular location is the cytoplasm. The protein localises to the P-body. It catalyses the reaction Endonucleolytic cleavage to 5'-phosphomonoester.. Its function is as follows. Required for RNA-mediated gene silencing (RNAi) by the RNA-induced silencing complex (RISC). The 'minimal RISC' appears to include ago2 bound to a short guide RNA such as a microRNA (miRNA) or short interfering RNA (siRNA). These guide RNAs direct RISC to complementary mRNAs that are targets for RISC-mediated gene silencing. The precise mechanism of gene silencing depends on the degree of complementarity between the miRNA or siRNA and its target. Binding of RISC to a perfectly complementary mRNA generally results in silencing due to endonucleolytic cleavage of the mRNA specifically by ago2. Binding of RISC to a partially complementary mRNA results in silencing through inhibition of translation, and this is independent of endonuclease activity. The inhibition of translational initiation leads to the accumulation of the affected mRNA in cytoplasmic processing bodies (P-bodies), where mRNA degradation may subsequently occur. This chain is Protein argonaute-2 (ago2), found in Xenopus tropicalis (Western clawed frog).